A 77-amino-acid chain; its full sequence is Putative defensin-like protein 120 (77 aa).

Residues 1–26 (MTQKATILAIFMVVLVLGLETKETQG) form the signal peptide. Intrachain disulfides connect cysteine 30/cysteine 75, cysteine 39/cysteine 60, cysteine 44/cysteine 69, and cysteine 48/cysteine 71.

Belongs to the DEFL family.

The protein localises to the secreted. The protein is Putative defensin-like protein 120 (LCR56) of Arabidopsis thaliana (Mouse-ear cress).